The primary structure comprises 115 residues: Large ribosomal subunit protein uL22 (115 aa).

The protein belongs to the universal ribosomal protein uL22 family. As to quaternary structure, part of the 50S ribosomal subunit.

Functionally, this protein binds specifically to 23S rRNA; its binding is stimulated by other ribosomal proteins, e.g. L4, L17, and L20. It is important during the early stages of 50S assembly. It makes multiple contacts with different domains of the 23S rRNA in the assembled 50S subunit and ribosome. In terms of biological role, the globular domain of the protein is located near the polypeptide exit tunnel on the outside of the subunit, while an extended beta-hairpin is found that lines the wall of the exit tunnel in the center of the 70S ribosome. The chain is Large ribosomal subunit protein uL22 from Lactiplantibacillus plantarum (strain ATCC BAA-793 / NCIMB 8826 / WCFS1) (Lactobacillus plantarum).